We begin with the raw amino-acid sequence, 183 residues long: Ribonuclease M5 (183 aa).

Residues 6-90 form the Toprim domain; it reads KEVIVVEGKD…AYISRVSGTK (85 aa). Residues E12, D59, and D61 each coordinate Mg(2+).

This sequence belongs to the ribonuclease M5 family. It depends on Mg(2+) as a cofactor.

The protein localises to the cytoplasm. The catalysed reaction is Endonucleolytic cleavage of RNA, removing 21 and 42 nucleotides, respectively, from the 5'- and 3'-termini of a 5S-rRNA precursor.. In terms of biological role, required for correct processing of both the 5' and 3' ends of 5S rRNA precursor. Cleaves both sides of a double-stranded region yielding mature 5S rRNA in one step. The polypeptide is Ribonuclease M5 (Fusobacterium nucleatum subsp. nucleatum (strain ATCC 25586 / DSM 15643 / BCRC 10681 / CIP 101130 / JCM 8532 / KCTC 2640 / LMG 13131 / VPI 4355)).